The following is a 189-amino-acid chain: Probable nicotinate-nucleotide adenylyltransferase (189 aa).

Belongs to the NadD family.

It carries out the reaction nicotinate beta-D-ribonucleotide + ATP + H(+) = deamido-NAD(+) + diphosphate. It participates in cofactor biosynthesis; NAD(+) biosynthesis; deamido-NAD(+) from nicotinate D-ribonucleotide: step 1/1. Catalyzes the reversible adenylation of nicotinate mononucleotide (NaMN) to nicotinic acid adenine dinucleotide (NaAD). The protein is Probable nicotinate-nucleotide adenylyltransferase of Ruegeria sp. (strain TM1040) (Silicibacter sp.).